The following is a 942-amino-acid chain: MLTSSMPQNLSLFGFSPLKSSSFALILRPFSLYPPIFASSSPAPSRRPPRTAGYRRSGPSPPRRKWSSFEEQKRKGRSPMEKDKAISFNHSSDSFEFNKRRAEGLDKVDKPKKNLKRNTRTLNPTNTIAYVQILGTGMDTQDTSPSVLLFFDKQRFIFNAGEGLQRFCTEHKIKLSKVDHIFLSRVCSETAGGLPGLLLTLAGIGEQGLSVNVWGPSDLKYLVDAMRSFIPRAAMVHTRSFGPSLNISDSAPQIGLSKPKDDAYVLVDDEVVKISAILLEPSRLEESGSKPGETAVIYVCELPEIKGKFDPKKAMALGLRAGPKYSYLQSGQSVKSDFKDITVHPSDVMGPSVPGPVVLLVDCPTESHAEELLSIPSMKTYYSCLDNSTDGAKLVNCIIHLSPASVTNSSTYRSWMKRFHSAQHILAGHEAKNMEFPILRASSRITARLNYLCPQFFPAPGFWSHQHDNNSINPTSLSKCFDSNLGESISAENLLKFTLRPHGNLGVDRSSIPSRLTALRVMDELLSEIPEISSKTEEIKQLWNGQHNKMMIEEPWLGESTVPSCLENIRRDDMEIVLLGTGSSQPSKYRNVTAIYIDLFSRGSILLDCGEGTLGQLKRRYGLEGADEAVRNLRCIWISHIHADHHTGLARILARRRELLKGLAHEPAIVVGPRSLKNFLDAYQRLEDLDMEFLDCRNTTTTSWASVETSRPEKNTSSGNAEGSLFSKGSLMQSIYKRPSSPLTDNSSALPFLKKLKKVLGEMGLEHLISFPVVHCPQAFGVSLKAAERKNIAGDEIPGWKMVYSGDTRPCPEMVEASKGATVLIHEATFEDALVEEAVAKNHSTTKEAIKVGSSAGVYRTVLTHFSQRYPKIPVIDESHMHNTCIAFDMMSINMADLHVLPKILPYFKTLFRNQVVEEEEEEEETDDDSLIRDKVPSFFIN.

Residues 1 to 50 (MLTSSMPQNLSLFGFSPLKSSSFALILRPFSLYPPIFASSSPAPSRRPPR) constitute a mitochondrion transit peptide. Residues 38–85 (ASSSPAPSRRPPRTAGYRRSGPSPPRRKWSSFEEQKRKGRSPMEKDKA) form a disordered region. Residues 67 to 85 (SSFEEQKRKGRSPMEKDKA) are compositionally biased toward basic and acidic residues.

The protein belongs to the RNase Z family. As to quaternary structure, homodimer. It depends on Zn(2+) as a cofactor. Ca(2+) is required as a cofactor. Requires Mn(2+) as cofactor. Mg(2+) serves as cofactor.

It localises to the mitochondrion. The enzyme catalyses Endonucleolytic cleavage of RNA, removing extra 3' nucleotides from tRNA precursor, generating 3' termini of tRNAs. A 3'-hydroxy group is left at the tRNA terminus and a 5'-phosphoryl group is left at the trailer molecule.. Its function is as follows. Zinc phosphodiesterase, which displays tRNA 3'-processing endonuclease activity. Involved in tRNA maturation, by removing a 3'-trailer from precursor tRNA. Can process the mitochondrial tRNA-like structures (t-elements). This is tRNAse Z TRZ4, mitochondrial from Arabidopsis thaliana (Mouse-ear cress).